Consider the following 471-residue polypeptide: Tryptophanase (471 aa).

K270 is subject to N6-(pyridoxal phosphate)lysine.

This sequence belongs to the beta-eliminating lyase family. In terms of assembly, homotetramer. Pyridoxal 5'-phosphate is required as a cofactor.

The catalysed reaction is L-tryptophan + H2O = indole + pyruvate + NH4(+). It participates in amino-acid degradation; L-tryptophan degradation via pyruvate pathway; indole and pyruvate from L-tryptophan: step 1/1. The chain is Tryptophanase from Histophilus somni (strain 2336) (Haemophilus somnus).